Here is a 1028-residue protein sequence, read N- to C-terminus: MMLSWKQLILLSFIGCLAGELLLQGPVFVKEPSNSIFPVGSEDKKITLNCEARGNPSPHYRWQLNGSDIDTSLDHRYKLNGGNLIVINPNRNWDTGSYQCFATNSLGTIVSREAKLQFAYLENFKSRMRSRVSVREGQGVVLLCGPPPHSGELSYAWVFNEYPSFVEEDSRRFVSQETGHLYIAKVEPSDVGNYTCVVTSTVTNARVLGSPTPLVLRSDGVMGEYEPKIELQFPETLPAAKGSTVKLECFALGNPVPQINWRRSDGMPFPTKIKLRKFNGVLEIPNFQQEDTGSYECIAENSRGKNVARGRLTYYAKPYWVQLLKDVETAVEDSLYWECRASGKPKPSYRWLKNGDALVLEERIQIENGALTIANLNVSDSGMFQCIAENKHGLIYSSAELKVLASAPDFSRNPMKKMIQVQVGSLVILDCKPSASPRALSFWKKGDTVVREQARISLLNDGGLKIMNVTKADAGIYTCIAENQFGKANGTTQLVVTEPTRIILAPSNMDVAVGESIILPCQVQHDPLLDIMFAWYFNGTLTDFKKDGSHFEKVGGSSSGDLMIRNIQLKHSGKYVCMVQTGVDSVSSAAELIVRGSPGPPENVKVDEITDTTAQLSWTEGTDSHSPVISYAVQARTPFSVGWQNVRTVPEAIDGKTRTATVVELNPWVEYEFRVVASNKIGGGEPSLPSEKVRTEEAAPEVAPSEVSGGGGSRSELVITWDPVPEELQNGGGFGYVVAFRPLGVTTWIQTVVTSPDNPRYVFRNESIVPFSPYEVKVGVYNNKGEGPFSPVTTVFSAEEEPTVAPSHISAHSLSSSEIEVSWNTIPWKSSNGRLLGYEVRYWNNGGEEESSSKVKVAGNQTSAVLRGLKSNLAYYTAVRAYNTAGAGPFSATVNATTKKTPPSQPPGNVVWNATDTKVLLNWEQVKALENESEVTGYKVFYRTSSQNNVQVLNTNKTSAELLLPIKEDYIIEVKATTDGGDGTSSEQIRIPRITSMDARGSTSAISDIHPVSGYISVLLFFIVNALW.

The first 19 residues, 1–19 (MMLSWKQLILLSFIGCLAG), serve as a signal peptide directing secretion. Ig-like C2-type domains follow at residues 26–117 (PVFV…AKLQ), 122–208 (ENFK…ARVL), 227–313 (PKIE…GRLT), 318–402 (PYWV…AELK), 408–497 (PDFS…LVVT), and 499–593 (PTRI…AELI). Intrachain disulfides connect C50-C100, C144-C196, C249-C297, C339-C386, and C431-C479. Residues N65 and N193 are each glycosylated (N-linked (GlcNAc...) asparagine). Residues N377, N468, N489, and N538 are each glycosylated (N-linked (GlcNAc...) asparagine). A disulfide bridge connects residues C521 and C577. Fibronectin type-III domains lie at 600 to 698 (PPEN…TEEA), 703 to 800 (APSE…SAEE), 805 to 901 (APSH…TKKT), and 902 to 998 (PPSQ…TSMD). The tract at residues 684-714 (GEPSLPSEKVRTEEAAPEVAPSEVSGGGGSR) is disordered. N765, N860, N895, N913, N931, and N956 each carry an N-linked (GlcNAc...) asparagine glycan. The GPI-anchor amidated serine moiety is linked to residue S1002. Residues 1003–1028 (TSAISDIHPVSGYISVLLFFIVNALW) constitute a propeptide, removed in mature form.

This sequence belongs to the immunoglobulin superfamily. Contactin family. As to quaternary structure, interacts with PTPRG. Specifically expressed in brain. Not expressed in peripheral tissues such as heart, lung, liver, spleen, kidney and skeletal muscle. In brain, it is restricted to subsets of neurons such as Purkinje cells of the cerebellum, granule cells of the dentate gyrus, and neurons in the superficial layers of the cerebral cortex.

The protein resides in the cell membrane. Its function is as follows. Contactins mediate cell surface interactions during nervous system development. Has some neurite outgrowth-promoting activity. This chain is Contactin-3 (Cntn3), found in Rattus norvegicus (Rat).